We begin with the raw amino-acid sequence, 226 residues long: Large ribosomal subunit protein uL1 (226 aa).

Belongs to the universal ribosomal protein uL1 family. In terms of assembly, part of the 50S ribosomal subunit.

In terms of biological role, binds directly to 23S rRNA. The L1 stalk is quite mobile in the ribosome, and is involved in E site tRNA release. Functionally, protein L1 is also a translational repressor protein, it controls the translation of the L11 operon by binding to its mRNA. This Mycoplasma mycoides subsp. mycoides SC (strain CCUG 32753 / NCTC 10114 / PG1) protein is Large ribosomal subunit protein uL1.